A 372-amino-acid polypeptide reads, in one-letter code: Carbamoyl phosphate synthase small chain (372 aa).

The interval 1–184 (MKAYIYLEND…SFQKFNDAKR (184 aa)) is CPSase. 3 residues coordinate L-glutamine: Ser-45, Gly-240, and Gly-242. The Glutamine amidotransferase type-1 domain occupies 188–372 (KVAVIDYGVK…YIFKEFMNLM (185 aa)). Cys-268 acts as the Nucleophile in catalysis. Leu-269, Gln-272, Asn-310, and Tyr-313 together coordinate L-glutamine. Active-site residues include His-351 and Glu-353.

It belongs to the CarA family. As to quaternary structure, composed of two chains; the small (or glutamine) chain promotes the hydrolysis of glutamine to ammonia, which is used by the large (or ammonia) chain to synthesize carbamoyl phosphate. Tetramer of heterodimers (alpha,beta)4.

The enzyme catalyses hydrogencarbonate + L-glutamine + 2 ATP + H2O = carbamoyl phosphate + L-glutamate + 2 ADP + phosphate + 2 H(+). The catalysed reaction is L-glutamine + H2O = L-glutamate + NH4(+). It participates in amino-acid biosynthesis; L-arginine biosynthesis; carbamoyl phosphate from bicarbonate: step 1/1. Its pathway is pyrimidine metabolism; UMP biosynthesis via de novo pathway; (S)-dihydroorotate from bicarbonate: step 1/3. In terms of biological role, small subunit of the glutamine-dependent carbamoyl phosphate synthetase (CPSase). CPSase catalyzes the formation of carbamoyl phosphate from the ammonia moiety of glutamine, carbonate, and phosphate donated by ATP, constituting the first step of 2 biosynthetic pathways, one leading to arginine and/or urea and the other to pyrimidine nucleotides. The small subunit (glutamine amidotransferase) binds and cleaves glutamine to supply the large subunit with the substrate ammonia. The protein is Carbamoyl phosphate synthase small chain of Campylobacter jejuni subsp. jejuni serotype O:2 (strain ATCC 700819 / NCTC 11168).